The chain runs to 320 residues: Annexin A5 (320 aa).

The residue at position 2 (alanine 2) is an N-acetylalanine. 4 Annexin repeats span residues 15 to 86 (FDER…ALMK), 87 to 158 (PSRL…VLLQ), 170 to 242 (AQVE…AVVK), and 246 to 317 (SIPA…LLCG). Residue lysine 29 forms a Glycyl lysine isopeptide (Lys-Gly) (interchain with G-Cter in SUMO1); alternate linkage. Lysine 29 participates in a covalent cross-link: Glycyl lysine isopeptide (Lys-Gly) (interchain with G-Cter in SUMO2); alternate. Serine 37 is modified (phosphoserine). 5 positions are modified to N6-acetyllysine: lysine 70, lysine 76, lysine 79, lysine 97, and lysine 101. The residue at position 290 (lysine 290) is an N6-succinyllysine. The short motif at 314 to 319 (LLCGED) is the [IL]-x-C-x-x-[DE] motif element.

The protein belongs to the annexin family. In terms of assembly, monomer. Binds ATRX and EIF5B. Interacts with hepatitis B virus (HBV). In terms of processing, S-nitrosylation is induced by interferon-gamma and oxidatively-modified low-densitity lipoprotein (LDL(ox)) possibly implicating the iNOS-S100A8/9 transnitrosylase complex.

Functionally, this protein is an anticoagulant protein that acts as an indirect inhibitor of the thromboplastin-specific complex, which is involved in the blood coagulation cascade. This is Annexin A5 (ANXA5) from Homo sapiens (Human).